The following is an 87-amino-acid chain: Small ribosomal subunit protein bS20 (87 aa).

A disordered region spans residues 1–28 (MANIKSQQKRNRTNERARLRNKSVKSSL).

Belongs to the bacterial ribosomal protein bS20 family.

Its function is as follows. Binds directly to 16S ribosomal RNA. The sequence is that of Small ribosomal subunit protein bS20 from Mycobacterium marinum (strain ATCC BAA-535 / M).